The following is a 184-amino-acid chain: Photosystem I assembly protein Ycf4 (184 aa).

Helical transmembrane passes span 19–39 (ISNFCWAFILFLGSLGFVLVG) and 57–77 (ILFFPQGIVMSFYGIAGLFIS).

It belongs to the Ycf4 family.

It localises to the plastid. The protein resides in the chloroplast thylakoid membrane. In terms of biological role, seems to be required for the assembly of the photosystem I complex. The polypeptide is Photosystem I assembly protein Ycf4 (Eucalyptus globulus subsp. globulus (Tasmanian blue gum)).